The primary structure comprises 1149 residues: Beta-alanine-activating enzyme (1149 aa).

Residues 178–186 (TSGTTGLPK), Asp-408, Arg-422, and Lys-543 contribute to the ATP site. The Carrier domain maps to 570-646 (ASVRLKLQNL…DLLSHIMTET (77 aa)). Residue Ser-605 is modified to O-(pantetheine 4'-phosphoryl)serine. The segment at 653–683 (PSKKRTADYSDSEASGKRQHKEMTTSSDTES) is disordered.

Belongs to the ATP-dependent AMP-binding enzyme family.

In terms of biological role, covalently binds beta-alanine in an ATP-dependent manner to form a thioester bond with its phosphopantetheine group and transfers it to an, as yet, unknown acceptor. May be required for a post-translational protein modification or for post-transcriptional modification of an RNA. In Danio rerio (Zebrafish), this protein is Beta-alanine-activating enzyme (aasdh).